Here is a 440-residue protein sequence, read N- to C-terminus: UDP-glycosyltransferase 87A1 (440 aa).

Residues serine 263, 312-314 (CDQ), 329-337 (HCGYNSTLE), and 351-354 (FWDQ) contribute to the UDP-alpha-D-glucose site.

The protein belongs to the UDP-glycosyltransferase family.

This chain is UDP-glycosyltransferase 87A1 (UGT87A1), found in Arabidopsis thaliana (Mouse-ear cress).